A 247-amino-acid polypeptide reads, in one-letter code: Acetate transporter protein patA (247 aa).

Residue asparagine 20 is glycosylated (N-linked (GlcNAc...) asparagine). Helical transmembrane passes span 37-57, 71-91, 106-126, 141-161, 169-189, and 202-222; these read PPIT…AIAF, AITN…LVLV, VFGG…PAFG, ALGY…IAAM, AMLG…FAMA, and AAGA…AHLM.

Belongs to the acetate uptake transporter (AceTr) (TC 2.A.96) family.

It is found in the endoplasmic reticulum membrane. The protein operates within mycotoxin biosynthesis; patulin biosynthesis. In terms of biological role, acetate transporter protein; part of the gene cluster that mediates the biosynthesis of patulin, an acetate-derived tetraketide mycotoxin produced by several fungal species that shows antimicrobial properties against several bacteria. May be involved in the uptake of acetate, a substrate for the synthesis of 6-methylsalicylic acid by the polyketide synthase patK. This Aspergillus clavatus (strain ATCC 1007 / CBS 513.65 / DSM 816 / NCTC 3887 / NRRL 1 / QM 1276 / 107) protein is Acetate transporter protein patA.